Consider the following 879-residue polypeptide: Protein P (879 aa).

The terminal protein domain (TP) stretch occupies residues 1-184 (MHPFSRLFRN…GKPYSWEHRQ (184 aa)). Residues 185–382 (LVQHNGQQHK…YCIHHIVSSI (198 aa)) are spacer. The tract at residues 304–345 (SASNSNKSRSREKAYSSNSTSKRYSPPLNYEKSDFSSPGVRG) is disordered. A polymerase/reverse transcriptase domain (RT) region spans residues 383-724 (DDWGPCTVTG…YEELWPVVRQ (342 aa)). Residues 393–634 (DVTIKSPRTP…NHLHFMGYVI (242 aa)) enclose the Reverse transcriptase domain. Mg(2+) contacts are provided by Asp-465, Asp-585, and Asp-586.

The protein belongs to the hepadnaviridae P protein family.

It catalyses the reaction DNA(n) + a 2'-deoxyribonucleoside 5'-triphosphate = DNA(n+1) + diphosphate. It carries out the reaction Endonucleolytic cleavage to 5'-phosphomonoester.. Its activity is regulated as follows. Activated by host HSP70 and HSP40 in vitro to be able to bind the epsilon loop of the pgRNA. Because deletion of the RNase H region renders the protein partly chaperone-independent, the chaperones may be needed indirectly to relieve occlusion of the RNA-binding site by this domain. Inhibited by several reverse-transcriptase inhibitors: Lamivudine, Adefovir and Entecavir. In terms of biological role, multifunctional enzyme that converts the viral RNA genome into dsDNA in viral cytoplasmic capsids. This enzyme displays a DNA polymerase activity that can copy either DNA or RNA templates, and a ribonuclease H (RNase H) activity that cleaves the RNA strand of RNA-DNA heteroduplexes in a partially processive 3'- to 5'-endonucleasic mode. Neo-synthesized pregenomic RNA (pgRNA) are encapsidated together with the P protein, and reverse-transcribed inside the nucleocapsid. Initiation of reverse-transcription occurs first by binding the epsilon loop on the pgRNA genome, and is initiated by protein priming, thereby the 5'-end of (-)DNA is covalently linked to P protein. Partial (+)DNA is synthesized from the (-)DNA template and generates the relaxed circular DNA (RC-DNA) genome. After budding and infection, the RC-DNA migrates in the nucleus, and is converted into a plasmid-like covalently closed circular DNA (cccDNA). The activity of P protein does not seem to be necessary for cccDNA generation, and is presumably released from (+)DNA by host nuclear DNA repair machinery. This Woodchuck hepatitis B virus (isolate 1) (WHV) protein is Protein P.